The primary structure comprises 213 residues: Superoxide dismutase [Mn] (213 aa).

Residues His-27, His-82, Asp-168, and His-172 each coordinate Mn(2+).

It belongs to the iron/manganese superoxide dismutase family. In terms of assembly, homodimer. Mn(2+) is required as a cofactor.

The catalysed reaction is 2 superoxide + 2 H(+) = H2O2 + O2. Destroys superoxide anion radicals which are normally produced within the cells and which are toxic to biological systems. The chain is Superoxide dismutase [Mn] (sodA) from Mannheimia haemolytica (Pasteurella haemolytica).